Consider the following 84-residue polypeptide: Mu-conotoxin-like Cal 12.2a (84 aa).

The first 19 residues, 1 to 19 (MKLTCVLVVLLLVLPFGDL), serve as a signal peptide directing secretion. Positions 20 to 42 (ITTSNTEDNKRGATPWQNSLKAR) are excised as a propeptide. Cystine bridges form between Cys45-Cys57, Cys52-Cys65, Cys59-Cys70, and Cys64-Cys76. Pro48 is modified (4-hydroxyproline). Trp72 bears the 6'-bromotryptophan mark. Pro77 carries the post-translational modification 4-hydroxyproline. A 6'-bromotryptophan modification is found at Trp81.

Belongs to the conotoxin O1 superfamily. As to expression, expressed by the venom duct.

It localises to the secreted. Mu-conotoxins block voltage-gated sodium channels. This toxin reversibly blocks voltage-gated sodium channel in cephalopods, with no alteration in the voltage dependence of sodium conductance or on the kinetics of inactivation. This chain is Mu-conotoxin-like Cal 12.2a, found in Californiconus californicus (California cone).